Here is a 326-residue protein sequence, read N- to C-terminus: Acetyl-coenzyme A carboxylase carboxyl transferase subunit alpha (326 aa).

One can recognise a CoA carboxyltransferase C-terminal domain in the interval E46 to E300.

The protein belongs to the AccA family. Acetyl-CoA carboxylase is a heterohexamer composed of biotin carboxyl carrier protein (AccB), biotin carboxylase (AccC) and two subunits each of ACCase subunit alpha (AccA) and ACCase subunit beta (AccD).

The protein resides in the cytoplasm. The catalysed reaction is N(6)-carboxybiotinyl-L-lysyl-[protein] + acetyl-CoA = N(6)-biotinyl-L-lysyl-[protein] + malonyl-CoA. It functions in the pathway lipid metabolism; malonyl-CoA biosynthesis; malonyl-CoA from acetyl-CoA: step 1/1. Functionally, component of the acetyl coenzyme A carboxylase (ACC) complex. First, biotin carboxylase catalyzes the carboxylation of biotin on its carrier protein (BCCP) and then the CO(2) group is transferred by the carboxyltransferase to acetyl-CoA to form malonyl-CoA. In Gloeobacter violaceus (strain ATCC 29082 / PCC 7421), this protein is Acetyl-coenzyme A carboxylase carboxyl transferase subunit alpha.